The following is a 395-amino-acid chain: 8-amino-7-oxononanoate synthase (395 aa).

R24 lines the substrate pocket. 111 to 112 provides a ligand contact to pyridoxal 5'-phosphate; sequence GF. H136 lines the substrate pocket. Residues S184, 209 to 212, and 240 to 243 each bind pyridoxal 5'-phosphate; these read DDAH and TLSK. K243 carries the N6-(pyridoxal phosphate)lysine modification. T357 contributes to the substrate binding site.

This sequence belongs to the class-II pyridoxal-phosphate-dependent aminotransferase family. BioF subfamily. Homodimer. The cofactor is pyridoxal 5'-phosphate.

The catalysed reaction is 6-carboxyhexanoyl-[ACP] + L-alanine + H(+) = (8S)-8-amino-7-oxononanoate + holo-[ACP] + CO2. It functions in the pathway cofactor biosynthesis; biotin biosynthesis. In terms of biological role, catalyzes the decarboxylative condensation of pimeloyl-[acyl-carrier protein] and L-alanine to produce 8-amino-7-oxononanoate (AON), [acyl-carrier protein], and carbon dioxide. This Alkaliphilus metalliredigens (strain QYMF) protein is 8-amino-7-oxononanoate synthase.